The sequence spans 161 residues: Allophycocyanin alpha subunit (161 aa).

Cysteine 81 is a (2R,3E)-phycocyanobilin binding site.

The protein belongs to the phycobiliprotein family. In terms of assembly, heterodimer of an alpha and a beta chain. In terms of processing, contains one covalently linked phycocyanobilin chromophore. The chromophore on position 81 is added by the phycocyanobilin lyase CpcUS.

The protein resides in the cellular thylakoid membrane. Light-harvesting photosynthetic bile pigment-protein from the phycobiliprotein complex. Allophycocyanin has a maximum absorption at approximately 650 nanometers. The sequence is that of Allophycocyanin alpha subunit (apcA) from Picosynechococcus sp. (strain ATCC 27264 / PCC 7002 / PR-6) (Agmenellum quadruplicatum).